Consider the following 96-residue polypeptide: MSNPPLDTEENATTLAITPIPAESLPLVRETVERLRPGVQRDGGDLELVAVQDNIVRLRLKGACVGCAMSAQTLGGVRRELVKVLDNPSVRVLPAP.

It belongs to the NifU family.

This is an uncharacterized protein from Azotobacter vinelandii.